Here is a 396-residue protein sequence, read N- to C-terminus: Elongation factor Tu (396 aa).

In terms of domain architecture, tr-type G spans 11–205 (KPHVNIGTIG…TVDEYIPTPE (195 aa)). Residues 20-27 (GHVDHGKT) are G1. 20 to 27 (GHVDHGKT) serves as a coordination point for GTP. A Mg(2+)-binding site is contributed by T27. The tract at residues 61 to 65 (GITIN) is G2. The segment at 82–85 (DAPG) is G3. GTP contacts are provided by residues 82 to 86 (DAPGH) and 137 to 140 (NKVD). Residues 137–140 (NKVD) are G4. Positions 175–177 (SAL) are G5.

The protein belongs to the TRAFAC class translation factor GTPase superfamily. Classic translation factor GTPase family. EF-Tu/EF-1A subfamily. As to quaternary structure, monomer.

Its subcellular location is the cytoplasm. It catalyses the reaction GTP + H2O = GDP + phosphate + H(+). Functionally, GTP hydrolase that promotes the GTP-dependent binding of aminoacyl-tRNA to the A-site of ribosomes during protein biosynthesis. The sequence is that of Elongation factor Tu from Lactobacillus johnsonii (strain CNCM I-12250 / La1 / NCC 533).